The following is a 2260-amino-acid chain: MDAFIDSEEVPMSSSSPNRVEPIAIVGFGFKFPQDITNAESFWKLLIERRSTMTEIPKNRWNIDGFYKEHGHRPGTVKNRGGHFLADDPARFDAPFFSIQPAEAECMDPQQRLLLETSYHALENAGIPMQAAMGTRTSVHVGCLLQEYSQISQRDAQMPGDYRIVGSSGLAMLANRLSWFYDFSGPSMTVDTACSGGLVAFHLACQELSAGSVDMSLVCGNNLCLLPDSTALLSSLNMMSKDSVCYSFDERASGYARGEGFGVLILKRLATAIADGDTIRGVVRSTGCGQDGNTPSITSPSQSAQERLIRETYARAGLDLGHTRYFEAHGTGTPVGDPCEAAAISNVFSCRTPKDPIFVGALKSNMGHPEGASGIAGVIKTLLVLEKGIIPPNVYPERINPAVAAAGPNLKFPLVPATWPTDGIRRASVNSFGYGGTNAHVVLDDALSFLRDHGLSGRHCTEILHASEGATKPAIFDALAINGEDGSYSTDTSACSEFFADNTPPDSMDDHETAPKLFILSAFDERATQRSISTFENWMRNHANDENDRQLLNDVAYTLAEKRTSFPWKSVCVALPNSLSQLSWSAPARARQRVNLCFVFTGQGAQWHGMGRELMIYPPFRDAMLRADRYFKSLGSAWSLIDELYLTSKEDSVIHQPELSQPICTALQMAIHDLLTSWRVCASISVGHSSGEIAAAYASRAISQESAWMIAYFRGLAVAIAQALNPSPGAMIAVQAPLKLGNTSWTSRMQNIRPISSLSACYNSPTSFTLSGSHSMLHQLAITLKQANIEVHILKIDVAYHSHYMKPVAGVYEKLLRTIEPGEQVEAQPSFVSTVTGKNVQQLNALRTSEYWQQNLCGSVKFSATLQSICARQDASTLFFVEIGPHSVLRSPLGDILKESGRDVAIDYSSVLRRDRAADITALECAGKLHTIGASIDITEVNKESEKSPRFLPSLPSYQFEDKKKYWLEGRTSIQYRQTQFVHHELLGSRTPDWNEHEARWTNRILLDQSPYLHDHQINGLCLMPAAGMLTMAIEATRQYYGHRAENASGYKLKDVTFTKAMTLSADARGTEIQLTLRPAAAESRDVQPGSLWNQFSLFVHEDGGWHLCCKGYVAIEYDDRRESSGELAESATAMEEKKQAFLAASQECRIAIDSADIYGAFGQAGLTYGPTFKGMRNVKWDQRNQATGTIGLRDWQRHAKFSYSDPHFIHPAALDTILQTTFPAYSIYAKDSSATTVPTGFSNAWFSVKLMRDPSDPQDVVVHAKVAGRGFRNKLFSITAAFANTQELCFYGDLETSTIGRNSPSADNTEVPRSLYRIDWQPAEFHRPTAVSPPSALSKSCIHIIYDDSEPLQSELMQALRRTMSAQDDVGVALVTWSSVSQHELDNATCVFLPGLDGNLLRRMQEDGLANIKSLLLKASTLIWITFQHQTIDQSPTEGLVSGLVRTLATESEDYRLVSVSLNPETGLDTVATNITKVATALLEPQDDPEDEYCEIDGRLCTPRVVDDAELTVQALSTKDTAVSITKPWSELDSPKLTIGAAGILKTLHYEQTSIQMDELASDDVVIQVKAVGLNTRDALVALGQVHDESFGSEIAGVVVNTGSSHDAGFQIGDRVFGVTRGGVAQLARCKASQLQRVPDRMSFCEAAAYPVAFCTAYYVLTQYCGTNSGDSILVHDAASVLGQAIIKIAAIHGYTKIFATVSSAGGAHFLENSLHVPKSNIFSTDSLDFQHGIRHLTNGEGVAVVVGSEDHLQDSWPCIAPFGRFVGVGEKDVFHSTANGSKEIVLPPTTKNIAFVSVSFQDLAESYMFKDIFKHALMLIEDAQVTMALPPTVFKQSEIEPALRRLTDVDVVEKIVIEMDSDEVVEMEPAQNSTKPLFRPDASYLIAGAFGGIGQSIARWMVQHGAKLLILPSRSPVEGTGSERDHFVQELKAQGAEVYAPVCDIADHDQLRKMLVSFSHLPAVKGCIQAAMVMRDSSFAKMTIEQWHQSLAPKVDGSWNLHRLLPLGLDFFVMLSSSTGIMGSFGQSNYTVGNTYQDTLAAHRMRHGQRAHALALSMVTGVGYVAQNDQVQALLRVRGMLEEVPMEDIYNLLRFCCDPDRVDASTVGSQIITPLTLPADLRAMGIVAPLGSTRPIYHYLDTLPSRLSSDTASAEAKNRPSYKLSEATSLVQATDIVVEAIQTQLSSLLVVSKDDIDSQRAIYRYGVDSLVAVEMRNWFSKAIGADVGTADIMSDISIWLLAVKVAGKSKFVRNELKE.

A Ketosynthase family 3 (KS3) domain is found at 20–445; the sequence is VEPIAIVGFG…GTNAHVVLDD (426 aa). Residues C194, H329, and H368 each act as for beta-ketoacyl synthase activity in the active site. A malonyl-CoA:ACP transacylase (MAT) domain region spans residues 598–933; the sequence is FVFTGQGAQW…ECAGKLHTIG (336 aa). The For malonyltransferase activity role is filled by S689. Residues 984–1121 form an N-terminal hotdog fold region; sequence HELLGSRTPD…GYVAIEYDDR (138 aa). The segment at 984 to 1281 is dehydratase (DH) domain; it reads HELLGSRTPD…FRNKLFSITA (298 aa). The PKS/mFAS DH domain maps to 984–1306; sequence HELLGSRTPD…TSTIGRNSPS (323 aa). Residue H1016 is the Proton acceptor; for dehydratase activity of the active site. The segment at 1150 to 1306 is C-terminal hotdog fold; sequence RIAIDSADIY…TSTIGRNSPS (157 aa). The active-site Proton donor; for dehydratase activity is D1216. The segment at 1544 to 1859 is enoylreductase (ER) domain; that stretch reads GILKTLHYEQ…DVDVVEKIVI (316 aa). The ketoreductase (KR) domain stretch occupies residues 1882-2104; sequence PDASYLIAGA…LRFCCDPDRV (223 aa). In terms of domain architecture, Carrier spans 2174-2251; the sequence is QATDIVVEAI…LLAVKVAGKS (78 aa). S2211 is modified (O-(pantetheine 4'-phosphoryl)serine).

Pantetheine 4'-phosphate serves as cofactor.

In terms of biological role, reducing polyketide synthase that catalyzes the formation of a C22 intermediate attached to the ACP. Release by intramolecular hydrolysis by the enolized delta-carbonyl would give the pyrone product aslanipyrone. Alternatively, KR-mediated reduction of the beta-carbonyl of the C22 intermediate would form a beta-hydroxy thioester intermediate, which could be a substrate for a further KS-mediated condensation of an additional C2 unit to form a C24 intermediate, which cyclizes by aldol condensation followed by decarboxylation to form aslaniol. Neither aslanipyrone, aslaniol, nor their derivatives have been detected in A.solani, probably due to a low abundance and/or extensive post-PKS modification. It is assumed that the branching point from C22 to C24 is the result of KR activity on the C22 intermediate anchored to the ACP. In Alternaria solani, this protein is Reducing polyketide synthase pksF.